The sequence spans 1032 residues: GPI ethanolamine phosphate transferase 1 (1032 aa).

Residues 1 to 6 (MARLGR) lie on the Cytoplasmic side of the membrane. A helical transmembrane segment spans residues 7 to 27 (FGFLALAVVFHLIYAYSIFDI). At 28–468 (YFVSPIVSGM…LQTYDWLFLR (441 aa)) the chain is on the lumenal side. N-linked (GlcNAc...) asparagine glycans are attached at residues asparagine 150 and asparagine 435. Residues 469–489 (TIITFGYLGWIAYALTTVIDL) form a helical membrane-spanning segment. The Cytoplasmic portion of the chain corresponds to 490-500 (HVLHRTSDSKR). The helical transmembrane segment at 501–521 (TVGSTIFFTSILAALFSVLLY) threads the bilayer. Residues 522 to 523 (QK) are Lumenal-facing. Residues 524-544 (SSWQYYVYGAFPIFFWEEVFA) form a helical membrane-spanning segment. Residues 545 to 564 (RRKALIAGREILLGHVRSFG) are Cytoplasmic-facing. Residues 565-585 (GYIASGFQLVAFVAVLEALLM) traverse the membrane as a helical segment. Residues 586–596 (RHQVQSYFHRE) are Lumenal-facing. Residues 597–617 (IYTVCFVLGSFWPILYGVDFV) traverse the membrane as a helical segment. The Cytoplasmic portion of the chain corresponds to 618-622 (RQNTV). A helical transmembrane segment spans residues 623 to 643 (LSATWAVGCSLMSTFTLLPVI). Residues 644-647 (KVEN) lie on the Lumenal side of the membrane. The helical transmembrane segment at 648–668 (INTITYGALLMFFTGLFYLLF) threads the bilayer. The Cytoplasmic portion of the chain corresponds to 669 to 688 (EDTILKHSKSSGHAPGAISS). A helical transmembrane segment spans residues 689-709 (LGSRVIMGMQVGMVLLALIVT). The Lumenal portion of the chain corresponds to 710–722 (RSSVSSLQAKQGL). A helical transmembrane segment spans residues 723-743 (PFGNQVVGWFVLVASLVLPFF). Over 744–766 (HRLYPNSHYLHRLMVLFLTFSPT) the chain is Cytoplasmic. The chain crosses the membrane as a helical span at residues 767–787 (FIILTISYEGLFYFVFCMTLV). Over 788–841 (TWVRLEHAIYVYTARSSAHYGGNNTVPKKPGLNATAVIDGQEYRYRRLGLADTR) the chain is Lumenal. 2 N-linked (GlcNAc...) asparagine glycosylation sites follow: asparagine 810 and asparagine 820. A helical transmembrane segment spans residues 842–862 (VALFFFFLLQSAFFSTGNIAS). Residues 863–884 (VSSFSLESVFRLIPVFSPFSQS) are Cytoplasmic-facing. The chain crosses the membrane as a helical span at residues 885–905 (ALLILKLLIPFAIISANLGIL). The Lumenal portion of the chain corresponds to 906-914 (NRRLEVAPS). The helical transmembrane segment at 915 to 935 (ALFMVVMSISDVMTLNFFYMV) threads the bilayer. The Cytoplasmic portion of the chain corresponds to 936-951 (RDEGSWLDIGTTISHF). A helical membrane pass occupies residues 952-972 (LIASFLCTFVAGLEFLSEVFI). Over 973 to 1032 (SGVDFGPTTKAIGASITKTVGGTAGSDVVDSQSGPEDAANSKKAEGLEGSETIRQNGGSV) the chain is Lumenal. The interval 994–1032 (GTAGSDVVDSQSGPEDAANSKKAEGLEGSETIRQNGGSV) is disordered.

This sequence belongs to the PIGG/PIGN/PIGO family. PIGN subfamily.

The protein localises to the endoplasmic reticulum membrane. It participates in glycolipid biosynthesis; glycosylphosphatidylinositol-anchor biosynthesis. Its function is as follows. Ethanolamine phosphate transferase involved in glycosylphosphatidylinositol-anchor biosynthesis. Transfers ethanolamine phosphate to the first alpha-1,4-linked mannose of the glycosylphosphatidylinositol precursor of GPI-anchor. The protein is GPI ethanolamine phosphate transferase 1 (mcd4) of Aspergillus fumigatus (strain ATCC MYA-4609 / CBS 101355 / FGSC A1100 / Af293) (Neosartorya fumigata).